Consider the following 83-residue polypeptide: Mu-theraphotoxin-Hhn2k (83 aa).

An N-terminal signal peptide occupies residues 1 to 21 (MKASMFLALAGLVLLFVVDYA). Residues 22 to 48 (SESEEKEFPIELLSKIFAVDVFKGEER) constitute a propeptide that is removed on maturation. 3 cysteine pairs are disulfide-bonded: Cys50–Cys65, Cys57–Cys70, and Cys64–Cys77. The residue at position 81 (Leu81) is a Leucine amide.

This sequence belongs to the neurotoxin 10 (Hwtx-1) family. 15 (Hntx-3) subfamily. Monomer. In terms of tissue distribution, expressed by the venom gland.

The protein resides in the secreted. In terms of biological role, lethal neurotoxin. Selectively blocks tetrodotoxin-sensitive voltage-gated sodium channels (Nav). Does not affect tetrodotoxin-resistant voltage-gated sodium channels or calcium channels. The protein is Mu-theraphotoxin-Hhn2k of Cyriopagopus hainanus (Chinese bird spider).